Here is a 185-residue protein sequence, read N- to C-terminus: MKLIVGLGNPGAKYDGTRHNVGFDVVDAVARRLNIEIKQSKANGLYGEGRIDGEKIFLLKPQTFMNRSGESVRPFLEYYNMEVEDLLVIYDDLDLPVGKIRLRQKGSAGGHNGMKSLIAHLGTSDFKRIRVGVDRPAPGETVVQHVLGRYRPEEKDAISEAIDLSAEAAEAFTKKPFLEVMNTFN.

TRNA is bound at residue Tyr-14. Residue His-19 is the Proton acceptor of the active site. Residues Phe-64, Asn-66, and Asn-112 each coordinate tRNA.

It belongs to the PTH family. In terms of assembly, monomer.

The protein resides in the cytoplasm. The enzyme catalyses an N-acyl-L-alpha-aminoacyl-tRNA + H2O = an N-acyl-L-amino acid + a tRNA + H(+). In terms of biological role, hydrolyzes ribosome-free peptidyl-tRNAs (with 1 or more amino acids incorporated), which drop off the ribosome during protein synthesis, or as a result of ribosome stalling. Functionally, catalyzes the release of premature peptidyl moieties from peptidyl-tRNA molecules trapped in stalled 50S ribosomal subunits, and thus maintains levels of free tRNAs and 50S ribosomes. This chain is Peptidyl-tRNA hydrolase, found in Halalkalibacterium halodurans (strain ATCC BAA-125 / DSM 18197 / FERM 7344 / JCM 9153 / C-125) (Bacillus halodurans).